Here is a 315-residue protein sequence, read N- to C-terminus: ATP synthase gamma chain (315 aa).

It belongs to the ATPase gamma chain family. F-type ATPases have 2 components, CF(1) - the catalytic core - and CF(0) - the membrane proton channel. CF(1) has five subunits: alpha(3), beta(3), gamma(1), delta(1), epsilon(1). CF(0) has three main subunits: a, b and c.

The protein resides in the cellular thylakoid membrane. In terms of biological role, produces ATP from ADP in the presence of a proton gradient across the membrane. The gamma chain is believed to be important in regulating ATPase activity and the flow of protons through the CF(0) complex. The chain is ATP synthase gamma chain from Synechococcus sp. (strain RCC307).